The following is a 370-amino-acid chain: Serine/threonine-protein kinase RIM11/MSD1 (370 aa).

The 284-residue stretch at 39–322 (FPTTEVVGHG…ALQCLCSPYF (284 aa)) folds into the Protein kinase domain. Residues 45–53 (VGHGSFGVV) and K68 each bind ATP. The Proton acceptor role is filled by D164. Y199 bears the Phosphotyrosine mark.

This sequence belongs to the protein kinase superfamily. CMGC Ser/Thr protein kinase family. GSK-3 subfamily. As to quaternary structure, interacts with TDA1.

The enzyme catalyses L-seryl-[protein] + ATP = O-phospho-L-seryl-[protein] + ADP + H(+). It carries out the reaction L-threonyl-[protein] + ATP = O-phospho-L-threonyl-[protein] + ADP + H(+). Functionally, serine/threonine protein kinase that is thought to function in regulating kinetochore activity and entry into meiosis. Could phosphorylate IME1. The sequence is that of Serine/threonine-protein kinase RIM11/MSD1 (RIM11) from Saccharomyces cerevisiae (strain ATCC 204508 / S288c) (Baker's yeast).